Consider the following 241-residue polypeptide: MATTLKPETLQKKEKAQQKTAEERAAAKKVRKAANKEKRKVIFDRAAAYQKEYTEAERSVIKAKRDAKASNSYYVDAQPKLVFVVRIKGINKIPPKPRKVLQLLRLTQINAGVFVRLTKATSELIKLAEPYVAYGYPSLSTIRQLVYKRGFGKVNKQRIALSDNAIIEANLGKFNILSIEDLIHEIYTVGPNFKQVSNFLWPFKLSNPNGGFRARKFQHFIQGGDTGNREQFINALVKQMN.

The disordered stretch occupies residues 1 to 32 (MATTLKPETLQKKEKAQQKTAEERAAAKKVRK). The span at 9–26 (TLQKKEKAQQKTAEERAA) shows a compositional bias: basic and acidic residues.

This sequence belongs to the universal ribosomal protein uL30 family. As to quaternary structure, component of the large ribosomal subunit. Mature ribosomes consist of a small (40S) and a large (60S) subunit. The 40S subunit contains about 32 different proteins and 1 molecule of RNA (18S). The 60S subunit contains 45 different proteins and 3 molecules of RNA (25S, 5.8S and 5S).

The protein resides in the cytoplasm. Its function is as follows. Component of the ribosome, a large ribonucleoprotein complex responsible for the synthesis of proteins in the cell. The small ribosomal subunit (SSU) binds messenger RNAs (mRNAs) and translates the encoded message by selecting cognate aminoacyl-transfer RNA (tRNA) molecules. The large subunit (LSU) contains the ribosomal catalytic site termed the peptidyl transferase center (PTC), which catalyzes the formation of peptide bonds, thereby polymerizing the amino acids delivered by tRNAs into a polypeptide chain. The nascent polypeptides leave the ribosome through a tunnel in the LSU and interact with protein factors that function in enzymatic processing, targeting, and the membrane insertion of nascent chains at the exit of the ribosomal tunnel. This is Large ribosomal subunit protein uL30 from Candida albicans (strain SC5314 / ATCC MYA-2876) (Yeast).